A 792-amino-acid polypeptide reads, in one-letter code: Phenylalanine--tRNA ligase beta subunit (792 aa).

Residues 39-147 (GESLGQVVVA…DDAPVGQALA (109 aa)) form the tRNA-binding domain. Residues 400–475 (PQPVHIRLRR…RIHGYDRVPT (76 aa)) form the B5 domain. Positions 453, 459, 462, and 463 each coordinate Mg(2+). The 94-residue stretch at 698-791 (SRFPSVRRDL…IEREHRARIR (94 aa)) folds into the FDX-ACB domain.

This sequence belongs to the phenylalanyl-tRNA synthetase beta subunit family. Type 1 subfamily. In terms of assembly, tetramer of two alpha and two beta subunits. Requires Mg(2+) as cofactor.

The protein resides in the cytoplasm. It carries out the reaction tRNA(Phe) + L-phenylalanine + ATP = L-phenylalanyl-tRNA(Phe) + AMP + diphosphate + H(+). The sequence is that of Phenylalanine--tRNA ligase beta subunit from Xanthomonas axonopodis pv. citri (strain 306).